Reading from the N-terminus, the 276-residue chain is Dermonecrotic toxin LsaSicTox-alphaIB2i (276 aa).

Residue H5 is part of the active site. The Mg(2+) site is built by E25 and D27. Residue H41 is the Nucleophile of the active site. 2 disulfides stabilise this stretch: C45/C51 and C47/C190. Residue D85 coordinates Mg(2+). N-linked (GlcNAc...) asparagine glycans are attached at residues N129 and N253.

This sequence belongs to the arthropod phospholipase D family. Class II subfamily. Requires Mg(2+) as cofactor. Expressed by the venom gland.

It is found in the secreted. The enzyme catalyses an N-(acyl)-sphingosylphosphocholine = an N-(acyl)-sphingosyl-1,3-cyclic phosphate + choline. It carries out the reaction an N-(acyl)-sphingosylphosphoethanolamine = an N-(acyl)-sphingosyl-1,3-cyclic phosphate + ethanolamine. The catalysed reaction is a 1-acyl-sn-glycero-3-phosphocholine = a 1-acyl-sn-glycero-2,3-cyclic phosphate + choline. It catalyses the reaction a 1-acyl-sn-glycero-3-phosphoethanolamine = a 1-acyl-sn-glycero-2,3-cyclic phosphate + ethanolamine. Functionally, dermonecrotic toxins cleave the phosphodiester linkage between the phosphate and headgroup of certain phospholipids (sphingolipid and lysolipid substrates), forming an alcohol (often choline) and a cyclic phosphate. This toxin acts on sphingomyelin (SM). It may also act on ceramide phosphoethanolamine (CPE), lysophosphatidylcholine (LPC) and lysophosphatidylethanolamine (LPE), but not on lysophosphatidylserine (LPS), and lysophosphatidylglycerol (LPG). It acts by transphosphatidylation, releasing exclusively cyclic phosphate products as second products. Induces dermonecrosis, hemolysis, increased vascular permeability, edema, inflammatory response, and platelet aggregation. This is Dermonecrotic toxin LsaSicTox-alphaIB2i from Loxosceles sabina (Tucson recluse spider).